A 609-amino-acid chain; its full sequence is UvrABC system protein C (609 aa).

The GIY-YIG domain occupies 15-93; that stretch reads SSAGVYRMYD…IKQYMPKYNV (79 aa). One can recognise a UVR domain in the interval 202 to 237; it reads QQVVTNLVTKMEQAAEEFHYEQAAAYRDQITALRKV.

The protein belongs to the UvrC family. Interacts with UvrB in an incision complex.

Its subcellular location is the cytoplasm. Functionally, the UvrABC repair system catalyzes the recognition and processing of DNA lesions. UvrC both incises the 5' and 3' sides of the lesion. The N-terminal half is responsible for the 3' incision and the C-terminal half is responsible for the 5' incision. This chain is UvrABC system protein C, found in Shewanella denitrificans (strain OS217 / ATCC BAA-1090 / DSM 15013).